We begin with the raw amino-acid sequence, 180 residues long: Small ribosomal subunit protein uS4 (180 aa).

Residues 103-165 enclose the S4 RNA-binding domain; it reads RRLQTIVYRK…KGSPFAKEGH (63 aa).

This sequence belongs to the universal ribosomal protein uS4 family. In terms of assembly, part of the 30S ribosomal subunit. Contacts protein S5. The interaction surface between S4 and S5 is involved in control of translational fidelity.

One of the primary rRNA binding proteins, it binds directly to 16S rRNA where it nucleates assembly of the body of the 30S subunit. Its function is as follows. With S5 and S12 plays an important role in translational accuracy. This chain is Small ribosomal subunit protein uS4, found in Thermococcus kodakarensis (strain ATCC BAA-918 / JCM 12380 / KOD1) (Pyrococcus kodakaraensis (strain KOD1)).